Here is a 910-residue protein sequence, read N- to C-terminus: MEAKVEEKEPEPVENAGPDAPVRLTPMMEQYIEIKAANVDSLLFYRMGDFYELFFDDAVAASAALGITLTKRGKHLGEDIPMCGVPVHAADDYLQKLIAKGYRVAVCEQVEDPAEAKKRGSKSVVKRDVIRLVTPGTLTEEKLLDPAQANFLMAMGRTRGDGALALAWIDISTGTFRVAETTPDRLFADIMRVDPRELVVADSAFHDEELRPVFDLIGKAVTPQPATLFDSAAAQTRIQHYFNVATLDGFGQFSRPELSAISGAIAYIEKTQISERPPLMRPEREHEGGTLFIDPATRASLELARTMSGNRDGSLLKAIDRTVTGGGARLLAERLTAPLTSPKEIALRLDSVSWCLSEQTLCEALRLELKGVPDMPRALSRLAVGRGGPRDLGALACGFEAAGGIASLLDGALLPDELAAARESIEKMPAGFAAHLDRALADELPLLKRDGGFVREGYNSELDEMRALRDQSRRVIAGLQADYIEETGIKSLKIKHNNVLGYFIEVTANNSGAMTDTDEAKSRFIHRQTMANAMRFTTTELAELESKIANAADRALSIELAIFEELTAEAVAHADSIRAAASALSVFDVSTALAVLAEEQGYCRPHVDDSLSFNIVAGRHPVVEQALRRQAANPFVANDCDLSPQRDGGDGAIWLLTGPNMGGKSTFLRQNALIAILAQMGSFVPAGSAHIGVVDRLFSRVGASDDLARGRSTFMVEMVETAAILNQAGEHSLVILDEIGRGTATFDGLSIAWAAVEYLHEKNRCRALFATHFHEMTALSEKLERLSNVTMRVKEWDNDVIFLHEVAKGAADRSYGVQVARLAGLPEAVVNRARDVLHQLEAGETSGKADRLIDDLPLFSVMLQQEKPKPQIQAKDSELANAVAAISPDELTPREALDLIYKLKELAGKA.

Positions 1 to 11 (MEAKVEEKEPE) are enriched in basic and acidic residues. The disordered stretch occupies residues 1–21 (MEAKVEEKEPEPVENAGPDAP). 658 to 665 (GPNMGGKS) contacts ATP.

This sequence belongs to the DNA mismatch repair MutS family.

In terms of biological role, this protein is involved in the repair of mismatches in DNA. It is possible that it carries out the mismatch recognition step. This protein has a weak ATPase activity. This Brucella suis (strain ATCC 23445 / NCTC 10510) protein is DNA mismatch repair protein MutS.